An 86-amino-acid chain; its full sequence is Muscarinic toxin 2 (86 aa).

The N-terminal stretch at 1–21 (MKTLLLTLVVVTIVCLDLGYT) is a signal peptide. 4 disulfides stabilise this stretch: Cys-24-Cys-45, Cys-38-Cys-63, Cys-67-Cys-78, and Cys-79-Cys-84.

It belongs to the three-finger toxin family. Short-chain subfamily. Aminergic toxin sub-subfamily. In terms of assembly, monomer. Expressed by the venom gland.

The protein resides in the secreted. Its function is as follows. Binds irreversibly to M1 (CHRM1) muscarinic acetylcholine receptors, and reveals a slightly weaker effect on M3 (CHRM3) receptors. The mechanism of toxin-receptor interaction comprises at least two steps. The first step is fast with no competition between the toxin and the antagonist. The second step is slow with formation of a more stable toxin-receptor complex and inhibition of the antagonist binding. The polypeptide is Muscarinic toxin 2 (Dendroaspis angusticeps (Eastern green mamba)).